Here is a 553-residue protein sequence, read N- to C-terminus: MTQAEHRPTNFIRQIIDEDLASGKHSSVATRFPPEPNGYLHIGHAKSICLNFGIARDYQGTCNLRFDDTNPVKEDVEYVESIQRDVQWLGFEWNGAVRYSSDYFDQLHAYAIELINKGLAYVEELTAEQIREYRGTLTQAGKNSPFRDRSVEENLALFEKMKDGGFKEGEACLRAKIDMASSFMVMRDPVIYRIKFAEHHQTGNKWCIYPMYDFTHCISDALEGITHSICTLEFQDNRRLYDWVLDNISIPCHPRQYEFSRLNLEYAIMSKRKLNQLVTEGVVEGWDDPRMPTVSGLRRRGYTPEAVREFCNRIGVTKQDNTVEMSALESCIREDLNERAPRAMAVLDPLRVVLENYPEDLVEELNIPNHPNIPEAGERLVPFSREIYIDRADFREEANKQYKRLVMGKEVRLRHAYIIKAERVEKDAEGNITTLYCSCDRDTLGTNPADGRKVKGVIHWVSAPHALDAEVRLYDRLFSVANPGAAEDFLSTINPQSLRIVPHAKLEPSLRDAKPEFAYQFEREGYFCADSKLSSAEKPVFNLTVALRDTWVG.

Positions Pro34–His44 match the 'HIGH' region motif. ATP is bound by residues Glu35–Asn37 and His41–Ser47. Residues Asp67 and Tyr212 each contribute to the L-glutamine site. Residues Thr231, Arg261–Leu262, and Met269–Lys271 contribute to the ATP site. A 'KMSKS' region motif is present at residues Ile268–Arg272.

This sequence belongs to the class-I aminoacyl-tRNA synthetase family. In terms of assembly, monomer.

It is found in the cytoplasm. The catalysed reaction is tRNA(Gln) + L-glutamine + ATP = L-glutaminyl-tRNA(Gln) + AMP + diphosphate. This is Glutamine--tRNA ligase from Tolumonas auensis (strain DSM 9187 / NBRC 110442 / TA 4).